Consider the following 576-residue polypeptide: Formate--tetrahydrofolate ligase 2 (576 aa).

Position 69–76 (69–76 (TPLGEGKT)) interacts with ATP.

The protein belongs to the formate--tetrahydrofolate ligase family.

The enzyme catalyses (6S)-5,6,7,8-tetrahydrofolate + formate + ATP = (6R)-10-formyltetrahydrofolate + ADP + phosphate. It functions in the pathway one-carbon metabolism; tetrahydrofolate interconversion. The sequence is that of Formate--tetrahydrofolate ligase 2 from Rubrobacter xylanophilus (strain DSM 9941 / JCM 11954 / NBRC 16129 / PRD-1).